Consider the following 1201-residue polypeptide: Transcription-repair-coupling factor (1201 aa).

The interval 1–27 (MRLLITLGPSGSTHGHSLHTDAGRRRG) is disordered. One can recognise a Helicase ATP-binding domain in the interval 670–831 (DMQKPEPMDR…MSGVRDMSII (162 aa)). Residue 683 to 690 (GDVGYGKT) participates in ATP binding. A DEEQ box motif is present at residues 784–787 (DEEQ). Residues 852 to 1006 (VVKEAIEREV…GFSIASHDLE (155 aa)) enclose the Helicase C-terminal domain.

It in the N-terminal section; belongs to the UvrB family. This sequence in the C-terminal section; belongs to the helicase family. RecG subfamily.

It is found in the cytoplasm. Couples transcription and DNA repair by recognizing RNA polymerase (RNAP) stalled at DNA lesions. Mediates ATP-dependent release of RNAP and its truncated transcript from the DNA, and recruitment of nucleotide excision repair machinery to the damaged site. The protein is Transcription-repair-coupling factor of Myxococcus xanthus.